A 173-amino-acid chain; its full sequence is MDLVVGRVVKAHGISGEVVVEIRTDDPEARFAPGAVLRGRPRSGAEREYTIESVRAHGGRLLVRLAGVADRNGADELRGTVFLVDTAELPAIDDPDEFYDHELEGMRVVTVDDAPVGKVAEVLHTAGGEILAVKADEGGREILVPFVGAIVTSVSRQNATIVIDPPEGLLDLA.

The 75-residue stretch at 95–169 (PDEFYDHELE…TIVIDPPEGL (75 aa)) folds into the PRC barrel domain.

This sequence belongs to the RimM family. Binds ribosomal protein uS19.

It localises to the cytoplasm. An accessory protein needed during the final step in the assembly of 30S ribosomal subunit, possibly for assembly of the head region. Essential for efficient processing of 16S rRNA. May be needed both before and after RbfA during the maturation of 16S rRNA. It has affinity for free ribosomal 30S subunits but not for 70S ribosomes. In Mycolicibacterium smegmatis (strain ATCC 700084 / mc(2)155) (Mycobacterium smegmatis), this protein is Ribosome maturation factor RimM.